We begin with the raw amino-acid sequence, 471 residues long: Putative multidrug resistance protein MdtD (471 aa).

The Periplasmic portion of the chain corresponds to 1 to 11; the sequence is MTDLPDSTRWQ. The chain crosses the membrane as a helical span at residues 12–32; that stretch reads LWIVAFGFFMQSLDTTIVNTA. Topologically, residues 33–48 are cytoplasmic; sequence LPSMAQSLGESPLHMH. Residues 49–69 form a helical membrane-spanning segment; the sequence is MVIVSYVLTVAVMLPASGWLA. At 70-76 the chain is on the periplasmic side; the sequence is DKVGVRN. The chain crosses the membrane as a helical span at residues 77 to 97; sequence IFFTAIVLFTLGSLFCALSGT. Residues 98-101 lie on the Cytoplasmic side of the membrane; the sequence is LNEL. The chain crosses the membrane as a helical span at residues 102 to 124; that stretch reads LLARALQGVGGAMMVPVGRLTVM. Residues 125-137 are Periplasmic-facing; that stretch reads KIVPREQYMAAMT. Residues 138–158 form a helical membrane-spanning segment; that stretch reads FVTLPGQVGPLLGPALGGLLV. Residues 159-164 are Cytoplasmic-facing; it reads EYASWH. A helical membrane pass occupies residues 165–185; it reads WIFLINIPVGIIGAIATLMLM. Topologically, residues 186–196 are periplasmic; that stretch reads PNYTMQTRRFD. The helical transmembrane segment at 197–217 threads the bilayer; the sequence is LSGFLLLAVGMAVLTLALDGS. The Cytoplasmic portion of the chain corresponds to 218–224; the sequence is KGTGFSP. A helical membrane pass occupies residues 225–245; it reads LAIAGLVAVGVVALVLYLLHA. Residues 246–262 are Periplasmic-facing; it reads QNNNRALFSLKLFRTRN. Residues 263–283 traverse the membrane as a helical segment; it reads FSLGLAGSFAGRIGSGMLPFM. Topologically, residues 284 to 285 are cytoplasmic; sequence TP. Residues 286–306 traverse the membrane as a helical segment; it reads VFLQIGLGFSPFHAGLMMIPM. At 307-341 the chain is on the periplasmic side; that stretch reads VLGSMGMKRIVVQVVNRFGYRRVLVATTLGLSLVT. Residues 342–362 form a helical membrane-spanning segment; sequence LLFMTTALLGWYYVLPFVLFL. The Cytoplasmic segment spans residues 363–395; sequence QGMVNSTRFSSMNTLTLKDLPDNLASSGNSLLS. Residues 396–416 form a helical membrane-spanning segment; sequence MIMQLSMSIGVTIAGLLLGLF. The Periplasmic segment spans residues 417-430; the sequence is GSQHVSVDSGTTQT. Residues 431–451 form a helical membrane-spanning segment; the sequence is VFMYTWLSMAFIIALPAFVFA. Residues 452–471 are Cytoplasmic-facing; that stretch reads RVPSDTHQNVAISRRKRSAQ.

The protein belongs to the major facilitator superfamily. TCR/Tet family.

It localises to the cell inner membrane. The sequence is that of Putative multidrug resistance protein MdtD from Escherichia coli O1:K1 / APEC.